Here is a 505-residue protein sequence, read N- to C-terminus: UDP-N-acetylmuramoyl-L-alanyl-D-glutamate--2,6-diaminopimelate ligase (505 aa).

Position 42 (serine 42) interacts with UDP-N-acetyl-alpha-D-muramoyl-L-alanyl-D-glutamate. 126-132 (GTNGKTT) serves as a coordination point for ATP. UDP-N-acetyl-alpha-D-muramoyl-L-alanyl-D-glutamate-binding positions include 168 to 169 (TT), serine 195, glutamine 201, and arginine 203. Residue lysine 235 is modified to N6-carboxylysine. Meso-2,6-diaminopimelate contacts are provided by residues arginine 399, 423–426 (DNPR), glycine 474, and glutamate 478. A Meso-diaminopimelate recognition motif motif is present at residues 423–426 (DNPR).

It belongs to the MurCDEF family. MurE subfamily. It depends on Mg(2+) as a cofactor. Post-translationally, carboxylation is probably crucial for Mg(2+) binding and, consequently, for the gamma-phosphate positioning of ATP.

The protein localises to the cytoplasm. The catalysed reaction is UDP-N-acetyl-alpha-D-muramoyl-L-alanyl-D-glutamate + meso-2,6-diaminopimelate + ATP = UDP-N-acetyl-alpha-D-muramoyl-L-alanyl-gamma-D-glutamyl-meso-2,6-diaminopimelate + ADP + phosphate + H(+). Its pathway is cell wall biogenesis; peptidoglycan biosynthesis. In terms of biological role, catalyzes the addition of meso-diaminopimelic acid to the nucleotide precursor UDP-N-acetylmuramoyl-L-alanyl-D-glutamate (UMAG) in the biosynthesis of bacterial cell-wall peptidoglycan. This chain is UDP-N-acetylmuramoyl-L-alanyl-D-glutamate--2,6-diaminopimelate ligase, found in Synechocystis sp. (strain ATCC 27184 / PCC 6803 / Kazusa).